The chain runs to 733 residues: Protein OBERON 3 (733 aa).

Basic and acidic residues predominate over residues 1–15 (MIGEKDLAGDGECSR). Disordered regions lie at residues 1 to 42 (MIGE…YHQK) and 118 to 142 (NPNSSKRKAHEEEEEAEEEEDKKSN). Residues 21-30 (PRFSNLNNQT) are compositionally biased toward polar residues. Positions 120–153 (NSSKRKAHEEEEEAEEEEDKKSNKIETLNLSLAL) form a coiled coil. The PHD-type zinc finger occupies 436-500 (SCMCPVCLRF…MFHCIGCAHK (65 aa)). The tract at residues 592-614 (VAAETSYRKDEASVTPSTSKDQK) is disordered. A coiled-coil region spans residues 644 to 733 (MFQKKADEAR…RMEVTRQQLV (90 aa)).

Self-interacts. Interacts with OBE1 and OBE2. Interacts with OBE4.

The protein resides in the nucleus. In terms of biological role, probable transcription factor that functions redundantly with OBE4 in specification of the hypophysis and establishment of the embryonic root. Involved in the activation of ARF5/MP-dependent gene expression during embryonic root meristem initiation. Involved in shoot meristem homeostasis. This Arabidopsis thaliana (Mouse-ear cress) protein is Protein OBERON 3.